The following is a 449-amino-acid chain: Bifunctional protein GlmU (449 aa).

A pyrophosphorylase region spans residues 1-229; the sequence is MKLSAVILAA…EEDIYGINDR (229 aa). Residues 8 to 11, Lys22, Gln73, and 78 to 79 each bind UDP-N-acetyl-alpha-D-glucosamine; these read LAAG and GT. A Mg(2+)-binding site is contributed by Asp102. UDP-N-acetyl-alpha-D-glucosamine-binding residues include Gly139, Glu154, Asn169, and Asn227. Mg(2+) is bound at residue Asn227. The tract at residues 230–250 is linker; that stretch reads VQLAQAENILRQRKNRELMLS. Positions 251–449 are N-acetyltransferase; it reads GVSLMDPAST…AGQKHLPRKG (199 aa). Residues Arg332 and Lys350 each contribute to the UDP-N-acetyl-alpha-D-glucosamine site. His362 (proton acceptor) is an active-site residue. UDP-N-acetyl-alpha-D-glucosamine is bound by residues Tyr365 and Asn376. Acetyl-CoA contacts are provided by residues Ala379, 385–386, Ser404, Ala422, and Arg439; that span reads NY.

The protein in the N-terminal section; belongs to the N-acetylglucosamine-1-phosphate uridyltransferase family. It in the C-terminal section; belongs to the transferase hexapeptide repeat family. Homotrimer. Requires Mg(2+) as cofactor.

The protein localises to the cytoplasm. The enzyme catalyses alpha-D-glucosamine 1-phosphate + acetyl-CoA = N-acetyl-alpha-D-glucosamine 1-phosphate + CoA + H(+). The catalysed reaction is N-acetyl-alpha-D-glucosamine 1-phosphate + UTP + H(+) = UDP-N-acetyl-alpha-D-glucosamine + diphosphate. Its pathway is nucleotide-sugar biosynthesis; UDP-N-acetyl-alpha-D-glucosamine biosynthesis; N-acetyl-alpha-D-glucosamine 1-phosphate from alpha-D-glucosamine 6-phosphate (route II): step 2/2. It participates in nucleotide-sugar biosynthesis; UDP-N-acetyl-alpha-D-glucosamine biosynthesis; UDP-N-acetyl-alpha-D-glucosamine from N-acetyl-alpha-D-glucosamine 1-phosphate: step 1/1. It functions in the pathway bacterial outer membrane biogenesis; LPS lipid A biosynthesis. Functionally, catalyzes the last two sequential reactions in the de novo biosynthetic pathway for UDP-N-acetylglucosamine (UDP-GlcNAc). The C-terminal domain catalyzes the transfer of acetyl group from acetyl coenzyme A to glucosamine-1-phosphate (GlcN-1-P) to produce N-acetylglucosamine-1-phosphate (GlcNAc-1-P), which is converted into UDP-GlcNAc by the transfer of uridine 5-monophosphate (from uridine 5-triphosphate), a reaction catalyzed by the N-terminal domain. This is Bifunctional protein GlmU from Syntrophomonas wolfei subsp. wolfei (strain DSM 2245B / Goettingen).